We begin with the raw amino-acid sequence, 753 residues long: 5-methyltetrahydropteroyltriglutamate--homocysteine methyltransferase (753 aa).

5-methyltetrahydropteroyltri-L-glutamate contacts are provided by residues 17–20 (RELK) and lysine 117. L-homocysteine contacts are provided by residues 431–433 (IGS) and glutamate 484. Residues 431-433 (IGS) and glutamate 484 contribute to the L-methionine site. 5-methyltetrahydropteroyltri-L-glutamate is bound by residues 515–516 (RC) and tryptophan 561. Aspartate 599 contributes to the L-homocysteine binding site. Aspartate 599 serves as a coordination point for L-methionine. Position 605 (glutamate 605) interacts with 5-methyltetrahydropteroyltri-L-glutamate. Zn(2+)-binding residues include histidine 641, cysteine 643, and glutamate 665. The Proton donor role is filled by histidine 694. Cysteine 726 serves as a coordination point for Zn(2+).

Belongs to the vitamin-B12 independent methionine synthase family. Monomer. The cofactor is Zn(2+).

It carries out the reaction 5-methyltetrahydropteroyltri-L-glutamate + L-homocysteine = tetrahydropteroyltri-L-glutamate + L-methionine. The protein operates within amino-acid biosynthesis; L-methionine biosynthesis via de novo pathway; L-methionine from L-homocysteine (MetE route): step 1/1. Catalyzes the transfer of a methyl group from 5-methyltetrahydrofolate to homocysteine resulting in methionine formation. The polypeptide is 5-methyltetrahydropteroyltriglutamate--homocysteine methyltransferase (Escherichia coli (strain K12)).